Here is a 612-residue protein sequence, read N- to C-terminus: Elongation factor 4 (612 aa).

A tr-type G domain is found at 12–194 (SRIRNFSIIA…QIVEKVPAPS (183 aa)). Residues 24–29 (DHGKST) and 141–144 (NKID) each bind GTP.

The protein belongs to the TRAFAC class translation factor GTPase superfamily. Classic translation factor GTPase family. LepA subfamily.

It is found in the cell membrane. It catalyses the reaction GTP + H2O = GDP + phosphate + H(+). In terms of biological role, required for accurate and efficient protein synthesis under certain stress conditions. May act as a fidelity factor of the translation reaction, by catalyzing a one-codon backward translocation of tRNAs on improperly translocated ribosomes. Back-translocation proceeds from a post-translocation (POST) complex to a pre-translocation (PRE) complex, thus giving elongation factor G a second chance to translocate the tRNAs correctly. Binds to ribosomes in a GTP-dependent manner. In Bacillus licheniformis (strain ATCC 14580 / DSM 13 / JCM 2505 / CCUG 7422 / NBRC 12200 / NCIMB 9375 / NCTC 10341 / NRRL NRS-1264 / Gibson 46), this protein is Elongation factor 4.